Reading from the N-terminus, the 145-residue chain is Large ribosomal subunit protein uL13 (145 aa).

This sequence belongs to the universal ribosomal protein uL13 family. Part of the 50S ribosomal subunit.

This protein is one of the early assembly proteins of the 50S ribosomal subunit, although it is not seen to bind rRNA by itself. It is important during the early stages of 50S assembly. The chain is Large ribosomal subunit protein uL13 from Staphylococcus saprophyticus subsp. saprophyticus (strain ATCC 15305 / DSM 20229 / NCIMB 8711 / NCTC 7292 / S-41).